Here is a 185-residue protein sequence, read N- to C-terminus: MTATTAPRLKTRYREEIAGKLREEFSYENVMQVPGLVKIVVNMGVGDAARDSKLIDGAVKDLTTITGQKPAVTKARKSIAQFKLREGQPIGCHVTLRGDRMWEFLDRTLSLALPRIRDFRGLSPKQFDGRGNYTFGLTEQVMFHEIDQDKIDRVRGMDITVVTTATNDDEGRALLRHLGFPFKEN.

The protein belongs to the universal ribosomal protein uL5 family. As to quaternary structure, part of the 50S ribosomal subunit; part of the 5S rRNA/L5/L18/L25 subcomplex. Contacts the 5S rRNA and the P site tRNA. Forms a bridge to the 30S subunit in the 70S ribosome.

In terms of biological role, this is one of the proteins that bind and probably mediate the attachment of the 5S RNA into the large ribosomal subunit, where it forms part of the central protuberance. In the 70S ribosome it contacts protein S13 of the 30S subunit (bridge B1b), connecting the 2 subunits; this bridge is implicated in subunit movement. Contacts the P site tRNA; the 5S rRNA and some of its associated proteins might help stabilize positioning of ribosome-bound tRNAs. The chain is Large ribosomal subunit protein uL5 from Streptomyces griseus subsp. griseus (strain JCM 4626 / CBS 651.72 / NBRC 13350 / KCC S-0626 / ISP 5235).